A 629-amino-acid polypeptide reads, in one-letter code: 1-deoxy-D-xylulose-5-phosphate synthase (629 aa).

Thiamine diphosphate is bound by residues histidine 85 and 126-128; that span reads GHS. Residue aspartate 157 coordinates Mg(2+). Residues 158 to 159, asparagine 186, tyrosine 293, and glutamate 373 each bind thiamine diphosphate; that span reads GS. Residue asparagine 186 coordinates Mg(2+).

This sequence belongs to the transketolase family. DXPS subfamily. In terms of assembly, homodimer. The cofactor is Mg(2+). Requires thiamine diphosphate as cofactor.

It catalyses the reaction D-glyceraldehyde 3-phosphate + pyruvate + H(+) = 1-deoxy-D-xylulose 5-phosphate + CO2. Its pathway is metabolic intermediate biosynthesis; 1-deoxy-D-xylulose 5-phosphate biosynthesis; 1-deoxy-D-xylulose 5-phosphate from D-glyceraldehyde 3-phosphate and pyruvate: step 1/1. Functionally, catalyzes the acyloin condensation reaction between C atoms 2 and 3 of pyruvate and glyceraldehyde 3-phosphate to yield 1-deoxy-D-xylulose-5-phosphate (DXP). This chain is 1-deoxy-D-xylulose-5-phosphate synthase, found in Helicobacter hepaticus (strain ATCC 51449 / 3B1).